The chain runs to 319 residues: Taste receptor type 2 member 30 (319 aa).

Residue methionine 1 is a topological domain, extracellular. The chain crosses the membrane as a helical span at residues 2-22 (ITFLPIIFSILIVVIFVIGNF). At 23–46 (ANGFIALVNSIEWVKRQKISFVDQ) the chain is on the cytoplasmic side. The chain crosses the membrane as a helical span at residues 47–67 (ILTALAVSRVGLLWVLLLHWY). Residues 68 to 86 (ATQLNPAFYSVEVRITVYN) lie on the Extracellular side of the membrane. A helical membrane pass occupies residues 87 to 107 (VWAVTNHFSSWLATSLSMFYL). Residues 108 to 126 (LKIANFSNLIFLRIKRRVK) lie on the Cytoplasmic side of the membrane. The chain crosses the membrane as a helical span at residues 127–147 (SVVLVILLGPLLFLVCHLFVI). Residues 148–178 (NMDETIWTKEYEGNMTWKIKLRSAMYHSNMT) are Extracellular-facing. Residues asparagine 161 and asparagine 176 are each glycosylated (N-linked (GlcNAc...) asparagine). Residues 179-199 (LTMLANFVPLTLTLISFLLLI) form a helical membrane-spanning segment. Residues 200 to 229 (CSLCKHLKKMQLHGKGSQDPSTKVHIKALQ) are Cytoplasmic-facing. A helical transmembrane segment spans residues 230-250 (TVTSFLLLCAIYFLSMIISVC). Over 251–259 (NLGRLEKQP) the chain is Extracellular. Residues 260–280 (VFMFCQAIIFSYPSTHPFILI) traverse the membrane as a helical segment. The Cytoplasmic segment spans residues 281–319 (LGNKKLKQIFLSVLWHVRYWVKDRSLRLHRFTRAALCKG).

The protein belongs to the G-protein coupled receptor T2R family.

The protein localises to the membrane. Receptor that may play a role in the perception of bitterness and is gustducin-linked. May play a role in sensing the chemical composition of the gastrointestinal content. The activity of this receptor may stimulate alpha gustducin, mediate PLC-beta-2 activation and lead to the gating of TRPM5. The protein is Taste receptor type 2 member 30 (TAS2R30) of Pan troglodytes (Chimpanzee).